A 162-amino-acid polypeptide reads, in one-letter code: MSDTFLEIAYERARQAQQRQMKRRRAAAHRAARGPAPARAPRASPTQRTGTAHEDQALRLLAGAGLVPLARNLHCRAGEIDLVMRDGATLVLVEVRARANPRYGGAAASVGRAKRARLLRCAALLLPDLARRHWGGRIPPVRFDVVAFEAGRADWLPAAFTL.

Positions 15-52 (QAQQRQMKRRRAAAHRAARGPAPARAPRASPTQRTGTA) are disordered. Over residues 20-32 (QMKRRRAAAHRAA) the composition is skewed to basic residues. Positions 33-48 (RGPAPARAPRASPTQR) are enriched in low complexity.

Belongs to the UPF0102 family.

In Bordetella petrii (strain ATCC BAA-461 / DSM 12804 / CCUG 43448), this protein is UPF0102 protein Bpet0439.